The following is a 37-amino-acid chain: MIEPLLCGIVLGLIPITLMGLFVAAWNQYRRGSALEG.

The chain crosses the membrane as a helical span at residues 5-25 (LLCGIVLGLIPITLMGLFVAA).

Belongs to the PetG family. The 4 large subunits of the cytochrome b6-f complex are cytochrome b6, subunit IV (17 kDa polypeptide, PetD), cytochrome f and the Rieske protein, while the 4 small subunits are PetG, PetL, PetM and PetN. The complex functions as a dimer.

Its subcellular location is the cellular thylakoid membrane. In terms of biological role, component of the cytochrome b6-f complex, which mediates electron transfer between photosystem II (PSII) and photosystem I (PSI), cyclic electron flow around PSI, and state transitions. PetG is required for either the stability or assembly of the cytochrome b6-f complex. The protein is Cytochrome b6-f complex subunit 5 of Synechococcus sp. (strain CC9311).